The chain runs to 91 residues: Elongation factor 1-beta (91 aa).

It belongs to the EF-1-beta/EF-1-delta family.

Functionally, promotes the exchange of GDP for GTP in EF-1-alpha/GDP, thus allowing the regeneration of EF-1-alpha/GTP that could then be used to form the ternary complex EF-1-alpha/GTP/AAtRNA. The polypeptide is Elongation factor 1-beta (Caldivirga maquilingensis (strain ATCC 700844 / DSM 13496 / JCM 10307 / IC-167)).